The sequence spans 1403 residues: Mannuronan C5-epimerase AlgE1 (1403 aa).

PbH1 repeat units follow at residues Asp133 to Glu155, Thr157 to Tyr179, Gln180 to Thr202, Thr204 to Arg226, Ala257 to Gly279, Ala280 to Val302, and Thr320 to Gly359. Disordered regions lie at residues Ser372 to Leu395 and Ala408 to Arg428. Hemolysin-type calcium-binding repeat units lie at residues Gly388–Thr403, Gly406–Leu422, Gly424–Phe440, Gly557–Leu573, Val574–Phe591, Glu697–Glu712, Gly716–Leu732, and Gly734–Phe750. PbH1 repeat units lie at residues Asp977–Glu999, Thr1001–Tyr1023, Leu1024–Thr1046, Thr1048–Arg1070, Thr1101–Gly1123, Thr1124–Val1146, Thr1163–Glu1185, and Ser1190–Gly1212. Hemolysin-type calcium-binding repeat units lie at residues Gly1227–Leu1243, Tyr1244–Leu1261, and Gly1263–Phe1279.

This sequence belongs to the D-mannuronate C5-epimerase family. The cofactor is Ca(2+).

It localises to the secreted. The enzyme catalyses [(1-&gt;4)-beta-D-mannuronosyl](n) = [alginate](n). It functions in the pathway glycan biosynthesis; alginate biosynthesis. Inhibited by zinc. Its function is as follows. Converts beta-D-mannuronic acid (M) to alpha-L-guluronic acid (G), producing a polymer with gel-forming capacity, required for the formation of the cyst coat. The protein is Mannuronan C5-epimerase AlgE1 of Azotobacter vinelandii.